The following is a 132-amino-acid chain: MQQLRKLRWGIAYIYASSNNTMIIITDLTGSETVARVSGGQVVKADRDKPSPYAAMMAAYKAAQIAMARGINAVHVKVRGPGGYGLKVPGPGAVAAIRALARAGMIIGRIEDVTPIPHDTIRPPGGRRGRRV.

It belongs to the universal ribosomal protein uS11 family. As to quaternary structure, part of the 30S ribosomal subunit.

Functionally, located on the platform of the 30S subunit. The chain is Small ribosomal subunit protein uS11 from Caldivirga maquilingensis (strain ATCC 700844 / DSM 13496 / JCM 10307 / IC-167).